The chain runs to 478 residues: Ribosomal RNA small subunit methyltransferase F (478 aa).

Residues 123-129, glutamate 147, aspartate 174, and aspartate 192 each bind S-adenosyl-L-methionine; that span reads AAAPGSK. Residue cysteine 245 is the Nucleophile of the active site.

This sequence belongs to the class I-like SAM-binding methyltransferase superfamily. RsmB/NOP family.

It localises to the cytoplasm. The catalysed reaction is cytidine(1407) in 16S rRNA + S-adenosyl-L-methionine = 5-methylcytidine(1407) in 16S rRNA + S-adenosyl-L-homocysteine + H(+). In terms of biological role, specifically methylates the cytosine at position 1407 (m5C1407) of 16S rRNA. This is Ribosomal RNA small subunit methyltransferase F from Vibrio campbellii (strain ATCC BAA-1116).